Here is a 95-residue protein sequence, read N- to C-terminus: Aspartyl/glutamyl-tRNA(Asn/Gln) amidotransferase subunit C (95 aa).

Belongs to the GatC family. Heterotrimer of A, B and C subunits.

The enzyme catalyses L-glutamyl-tRNA(Gln) + L-glutamine + ATP + H2O = L-glutaminyl-tRNA(Gln) + L-glutamate + ADP + phosphate + H(+). The catalysed reaction is L-aspartyl-tRNA(Asn) + L-glutamine + ATP + H2O = L-asparaginyl-tRNA(Asn) + L-glutamate + ADP + phosphate + 2 H(+). Allows the formation of correctly charged Asn-tRNA(Asn) or Gln-tRNA(Gln) through the transamidation of misacylated Asp-tRNA(Asn) or Glu-tRNA(Gln) in organisms which lack either or both of asparaginyl-tRNA or glutaminyl-tRNA synthetases. The reaction takes place in the presence of glutamine and ATP through an activated phospho-Asp-tRNA(Asn) or phospho-Glu-tRNA(Gln). The protein is Aspartyl/glutamyl-tRNA(Asn/Gln) amidotransferase subunit C of Geotalea daltonii (strain DSM 22248 / JCM 15807 / FRC-32) (Geobacter daltonii).